Consider the following 82-residue polypeptide: Small ribosomal subunit protein bS16 (82 aa).

It belongs to the bacterial ribosomal protein bS16 family.

This chain is Small ribosomal subunit protein bS16, found in Edwardsiella ictaluri (strain 93-146).